The sequence spans 147 residues: Large ribosomal subunit protein uL13 (147 aa).

It belongs to the universal ribosomal protein uL13 family. As to quaternary structure, part of the 50S ribosomal subunit.

This protein is one of the early assembly proteins of the 50S ribosomal subunit, although it is not seen to bind rRNA by itself. It is important during the early stages of 50S assembly. The chain is Large ribosomal subunit protein uL13 from Lactobacillus johnsonii (strain CNCM I-12250 / La1 / NCC 533).